The following is a 351-amino-acid chain: Selenide, water dikinase (351 aa).

Sec-15 is a catalytic residue. Sec-15 is a non-standard amino acid (selenocysteine). ATP contacts are provided by residues Lys-18 and 47-49; that span reads DNE. Asp-50 is a Mg(2+) binding site. ATP is bound by residues Asp-67, Asp-90, and 138-140; that span reads GHS. Asp-90 provides a ligand contact to Mg(2+). Asp-227 contributes to the Mg(2+) binding site.

The protein belongs to the selenophosphate synthase 1 family. Class I subfamily. As to quaternary structure, homodimer. Mg(2+) serves as cofactor.

The enzyme catalyses hydrogenselenide + ATP + H2O = selenophosphate + AMP + phosphate + 2 H(+). In terms of biological role, synthesizes selenophosphate from selenide and ATP. The protein is Selenide, water dikinase of Nitratidesulfovibrio vulgaris (strain ATCC 29579 / DSM 644 / CCUG 34227 / NCIMB 8303 / VKM B-1760 / Hildenborough) (Desulfovibrio vulgaris).